We begin with the raw amino-acid sequence, 121 residues long: Large ribosomal subunit protein bL20 (121 aa).

This sequence belongs to the bacterial ribosomal protein bL20 family.

Its function is as follows. Binds directly to 23S ribosomal RNA and is necessary for the in vitro assembly process of the 50S ribosomal subunit. It is not involved in the protein synthesizing functions of that subunit. This Roseobacter denitrificans (strain ATCC 33942 / OCh 114) (Erythrobacter sp. (strain OCh 114)) protein is Large ribosomal subunit protein bL20.